Here is a 665-residue protein sequence, read N- to C-terminus: Probable protein transport Sec1a (665 aa).

A disordered region spans residues 543-594; the sequence is PSPSFRGIPSASTQTSPAHQPAQSMRSRRTGGTWARPRDSDDGYSSDSVLKH. 2 stretches are compositionally biased toward polar residues: residues 552–567 and 585–594; these read SAST…AQSM and GYSSDSVLKH.

This sequence belongs to the STXBP/unc-18/SEC1 family.

Functionally, involved in the vesicle trafficking. Binds syntaxins. In Oryza sativa subsp. japonica (Rice), this protein is Probable protein transport Sec1a.